The sequence spans 343 residues: Sodium/bile acid cotransporter 7-A (343 aa).

Residues 1 to 10 (MGLLERLRKE) lie on the Cytoplasmic side of the membrane. The chain crosses the membrane as a helical span at residues 11–31 (WFIVGIILVIAAAKLEPTVGV). At 32–37 (KGGPLK) the chain is on the extracellular side. A helical membrane pass occupies residues 38 to 58 (PEITITYIAVSAIFFNSGLSL). The Cytoplasmic segment spans residues 59-71 (KTEELTNALMHVK). The helical transmembrane segment at 72–92 (LHLFVQLFTLVFFPTAIWLFL) threads the bilayer. Over 93–116 (QVLSLTPINEWLLKGLQTVSCMPP) the chain is Extracellular. A helical transmembrane segment spans residues 117-137 (PVSSAVILTKAVGGNEAAAIF). Residue N138 is a topological domain, cytoplasmic. A helical membrane pass occupies residues 139-159 (SAFGSFLGIVVTPLLLLLFLG). The Extracellular segment spans residues 160–163 (SSSS). The helical transmembrane segment at 164-184 (VPFTSIFSQLFMTVVVPLIIG) threads the bilayer. The Cytoplasmic segment spans residues 185-201 (QIVRRYIKDWLERKKPP). A helical transmembrane segment spans residues 202–222 (FGAISSCVLLMIIYTTFCDTF). The Extracellular segment spans residues 223-234 (SNPNIDLDTFSL). The helical transmembrane segment at 235–255 (VVIVFIIFFIQLAFMLLTFLF) threads the bilayer. Residues 256–270 (STSKNSGFTPADTVA) lie on the Cytoplasmic side of the membrane. The helical transmembrane segment at 271–291 (IVFCSTHKSLTLGIPMLKIVF) threads the bilayer. Topologically, residues 292–298 (VGYEHLS) are extracellular. Residues 299-319 (LISVPLLIYHPAQILLGSVLV) form a helical membrane-spanning segment. Topologically, residues 320–343 (PTIKSWMLSRQKALKLTRQPKIPL) are cytoplasmic.

It belongs to the bile acid:sodium symporter (BASS) (TC 2.A.28) family. As to expression, strongly expressed in small intestine. Moderately expressed in spleen. Weakly expressed in skeletal muscle. Not detected in other tissues tested.

It localises to the cell membrane. The protein resides in the endoplasmic reticulum membrane. The protein localises to the golgi apparatus membrane. Functionally, involved in teeth and skeletal development. Has an essential role in the biosynthesis and trafficking of glycosaminoglycans and glycoproteins to produce a proper functioning extracellular matrix. Required for extracellular matrix mineralization. Also involved in the regulation of cellular calcium homeostasis. Does not show transport activity towards bile acids or steroid sulfates. This is Sodium/bile acid cotransporter 7-A (slc10a7-a) from Xenopus laevis (African clawed frog).